A 167-amino-acid polypeptide reads, in one-letter code: uncharacterized protein (167 aa).

Belongs to the A.longa ORF167/ORF288 family.

It is found in the plastid. This is an uncharacterized protein from Euglena longa (Euglenophycean alga).